The chain runs to 328 residues: Src kinase-associated phosphoprotein 2 (328 aa).

A PH domain is found at 103-206; sequence EYLRAGYLEK…WVNIIMNSRG (104 aa). Residues 231–262 form a disordered region; sequence IYEELPEESEKPVTEIETPKATPVPVNNTSGK. The span at 238-248 shows a compositional bias: basic and acidic residues; it reads ESEKPVTEIET. Positions 266-327 constitute an SH3 domain; that stretch reads DYANFYRGLW…PKAYIMEMYD (62 aa).

Belongs to the SKAP family. In terms of processing, phosphorylated on tyrosines.

The protein resides in the cytoplasm. Functionally, may be involved in B-cell and macrophage adhesion processes. May play a role in src signaling pathway. The polypeptide is Src kinase-associated phosphoprotein 2 (skap2) (Xenopus tropicalis (Western clawed frog)).